The primary structure comprises 229 residues: MHEAFTIEQLPPSWQEQLKDEWSQPYWSQLLAFLKSEYAQATIYPKKENVFAALQSTPFDQVRVVILGQDPYHGEGQAHGLSFSVPRGQALPPSLRNIFQELHTDLGIRNESGCLQAWADQGVLLLNTVLTVRAGEAFSHAGRGWERFTDAIVTKLIQNRTHVIFVLWGNAARQKCNLLFQTKHQHAVLACPHPSPLAAHRGFFGCCHFSKINYLLKKQGKTMINWKIE.

The Proton acceptor role is filled by Asp-70.

Belongs to the uracil-DNA glycosylase (UDG) superfamily. UNG family.

Its subcellular location is the cytoplasm. It carries out the reaction Hydrolyzes single-stranded DNA or mismatched double-stranded DNA and polynucleotides, releasing free uracil.. Excises uracil residues from the DNA which can arise as a result of misincorporation of dUMP residues by DNA polymerase or due to deamination of cytosine. This chain is Uracil-DNA glycosylase, found in Chlamydia trachomatis serovar A (strain ATCC VR-571B / DSM 19440 / HAR-13).